The sequence spans 113 residues: Large ribosomal subunit protein uL22 (113 aa).

This sequence belongs to the universal ribosomal protein uL22 family. Part of the 50S ribosomal subunit.

This protein binds specifically to 23S rRNA; its binding is stimulated by other ribosomal proteins, e.g. L4, L17, and L20. It is important during the early stages of 50S assembly. It makes multiple contacts with different domains of the 23S rRNA in the assembled 50S subunit and ribosome. In terms of biological role, the globular domain of the protein is located near the polypeptide exit tunnel on the outside of the subunit, while an extended beta-hairpin is found that lines the wall of the exit tunnel in the center of the 70S ribosome. The sequence is that of Large ribosomal subunit protein uL22 from Carboxydothermus hydrogenoformans (strain ATCC BAA-161 / DSM 6008 / Z-2901).